Consider the following 945-residue polypeptide: 26S proteasome regulatory subunit RPN2 (945 aa).

The residue at position 2 (Ser2) is an N-acetylserine. PC repeat units follow at residues 366 to 399 (TATA…SSRF), 403 to 440 (GSLY…EDVD), 445 to 479 (GASL…TSGE), 480 to 514 (AAAL…GNIT), 516 to 549 (GLAV…LLRY), 550 to 585 (GGAF…DVRR), 586 to 618 (AAVI…AHVR), 620 to 654 (GTAF…FVRQ), 655 to 692 (AAMI…KHQE), and 698 to 734 (GACV…VGLV). Position 801 is a phosphothreonine (Thr801). Residues 810 to 819 (AKARAKKTKK) show a composition bias toward basic residues. The disordered stretch occupies residues 810-851 (AKARAKKTKKEKGPNEEEKKKEHEEKEKERETNKKGIKETKE). Residues 820–851 (EKGPNEEEKKKEHEEKEKERETNKKGIKETKE) show a composition bias toward basic and acidic residues. A Phosphothreonine modification is found at Thr932.

Belongs to the proteasome subunit S1 family. Interacts with UBR1. N-acetylated by NAT1.

Functionally, acts as a regulatory subunit of the 26S proteasome which is involved in the ATP-dependent degradation of ubiquitinated proteins. This chain is 26S proteasome regulatory subunit RPN2 (RPN2), found in Saccharomyces cerevisiae (strain ATCC 204508 / S288c) (Baker's yeast).